Here is a 185-residue protein sequence, read N- to C-terminus: Elongation factor P (185 aa).

Belongs to the elongation factor P family.

The protein resides in the cytoplasm. It participates in protein biosynthesis; polypeptide chain elongation. Its function is as follows. Involved in peptide bond synthesis. Stimulates efficient translation and peptide-bond synthesis on native or reconstituted 70S ribosomes in vitro. Probably functions indirectly by altering the affinity of the ribosome for aminoacyl-tRNA, thus increasing their reactivity as acceptors for peptidyl transferase. The polypeptide is Elongation factor P (Thermotoga petrophila (strain ATCC BAA-488 / DSM 13995 / JCM 10881 / RKU-1)).